The primary structure comprises 104 residues: MSMTEVKISEERKYDIVRAPVITEKATLIGEHGQVIFRVPLDATKPEIKAAVEGLFKVKVKAVNTLRSKGKVKRFRGTVGKRSDTKKAIVTLAEGHSIDVTTGI.

This sequence belongs to the universal ribosomal protein uL23 family. Part of the 50S ribosomal subunit. Contacts protein L29, and trigger factor when it is bound to the ribosome.

Its function is as follows. One of the early assembly proteins it binds 23S rRNA. One of the proteins that surrounds the polypeptide exit tunnel on the outside of the ribosome. Forms the main docking site for trigger factor binding to the ribosome. The sequence is that of Large ribosomal subunit protein uL23 from Rhodospirillum rubrum (strain ATCC 11170 / ATH 1.1.1 / DSM 467 / LMG 4362 / NCIMB 8255 / S1).